The primary structure comprises 198 residues: Small ribosomal subunit protein uS4 (198 aa).

Positions 91–154 (SRLDNVVYRL…KNLNIVQEAV (64 aa)) constitute an S4 RNA-binding domain.

Belongs to the universal ribosomal protein uS4 family. Part of the 30S ribosomal subunit. Contacts protein S5. The interaction surface between S4 and S5 is involved in control of translational fidelity.

In terms of biological role, one of the primary rRNA binding proteins, it binds directly to 16S rRNA where it nucleates assembly of the body of the 30S subunit. Functionally, with S5 and S12 plays an important role in translational accuracy. The polypeptide is Small ribosomal subunit protein uS4 (Onion yellows phytoplasma (strain OY-M)).